The sequence spans 446 residues: NADH-quinone oxidoreductase subunit D (446 aa).

Belongs to the complex I 49 kDa subunit family. As to quaternary structure, NDH-1 is composed of 14 different subunits. Subunits NuoB, C, D, E, F, and G constitute the peripheral sector of the complex.

It is found in the cell membrane. It catalyses the reaction a quinone + NADH + 5 H(+)(in) = a quinol + NAD(+) + 4 H(+)(out). Functionally, NDH-1 shuttles electrons from NADH, via FMN and iron-sulfur (Fe-S) centers, to quinones in the respiratory chain. The immediate electron acceptor for the enzyme in this species is believed to be a menaquinone. Couples the redox reaction to proton translocation (for every two electrons transferred, four hydrogen ions are translocated across the cytoplasmic membrane), and thus conserves the redox energy in a proton gradient. This Nocardioides sp. (strain ATCC BAA-499 / JS614) protein is NADH-quinone oxidoreductase subunit D.